The following is a 111-amino-acid chain: Cornifelin (111 aa).

The protein belongs to the cornifelin family. As to quaternary structure, directly or indirectly cross-linked to CE proteins loricin and involucrin (IVL).

It localises to the cytoplasm. In terms of biological role, part of the insoluble cornified cell envelope (CE) of stratified squamous epithelia. This is Cornifelin (Cnfn) from Mus musculus (Mouse).